The chain runs to 284 residues: Tropomyosin (284 aa).

The disordered stretch occupies residues 1–41 (MDAIKKKMQAMKLEKDNAVDRAETAEQQSRDAALRAEKAEE). Positions 1–284 (MDAIKKKMQA…DQTFSELTGY (284 aa)) form a coiled coil. Residues 12–41 (KLEKDNAVDRAETAEQQSRDAALRAEKAEE) are compositionally biased toward basic and acidic residues.

This sequence belongs to the tropomyosin family. As to quaternary structure, homodimer.

Tropomyosin, in association with the troponin complex, plays a central role in the calcium dependent regulation of muscle contraction. The protein is Tropomyosin of Haemaphysalis longicornis (Bush tick).